The primary structure comprises 463 residues: Chaperone SurA (463 aa).

The first 25 residues, 1-25 (MTKPFSVVLASLLAITSTVSPLASA), serve as a signal peptide directing secretion. PpiC domains are found at residues 174–276 (GSQY…KLVE) and 289–388 (VTEY…QRVG). Disordered stretches follow at residues 328–348 (QATA…GDLG) and 432–463 (RTGD…KPTR). Residues 440 to 452 (NATAAPAKSADPA) are compositionally biased toward low complexity. The span at 453–463 (APSPPPAKPTR) shows a compositional bias: pro residues.

Its subcellular location is the periplasm. It carries out the reaction [protein]-peptidylproline (omega=180) = [protein]-peptidylproline (omega=0). In terms of biological role, chaperone involved in the correct folding and assembly of outer membrane proteins. Recognizes specific patterns of aromatic residues and the orientation of their side chains, which are found more frequently in integral outer membrane proteins. May act in both early periplasmic and late outer membrane-associated steps of protein maturation. The polypeptide is Chaperone SurA (Xanthomonas euvesicatoria pv. vesicatoria (strain 85-10) (Xanthomonas campestris pv. vesicatoria)).